Reading from the N-terminus, the 366-residue chain is S-adenosylmethionine:tRNA ribosyltransferase-isomerase (366 aa).

Belongs to the QueA family. In terms of assembly, monomer.

The protein resides in the cytoplasm. It catalyses the reaction 7-aminomethyl-7-carbaguanosine(34) in tRNA + S-adenosyl-L-methionine = epoxyqueuosine(34) in tRNA + adenine + L-methionine + 2 H(+). The protein operates within tRNA modification; tRNA-queuosine biosynthesis. Functionally, transfers and isomerizes the ribose moiety from AdoMet to the 7-aminomethyl group of 7-deazaguanine (preQ1-tRNA) to give epoxyqueuosine (oQ-tRNA). This is S-adenosylmethionine:tRNA ribosyltransferase-isomerase from Caulobacter vibrioides (strain ATCC 19089 / CIP 103742 / CB 15) (Caulobacter crescentus).